The sequence spans 505 residues: Methylmalonyl-CoA carboxyltransferase 5S subunit (505 aa).

Residues Val14–His276 enclose the Pyruvate carboxyltransferase domain. Substrate contacts are provided by residues Arg22–Gln26, Ala59, and Lys184. Asp23 is a binding site for Co(2+). Co(2+) is bound by residues Lys184, His215, and His217. Lys184 is subject to N6-carboxylysine; partial.

As to quaternary structure, homodimer. Transcarboxylase is composed of three subunits: 1.3S, 5S, and 12S. The core of the enzyme is composed of six 12S subunits. On each side of the core there are three pairs of 5S subunits. Each 5S dimer is attached to the core by two 1.3S subunits. Thus the total number of chains is 30 (6 + 12 + 12). Co(2+) is required as a cofactor. Post-translationally, lys-184 is carboxylated in the free enzyme and helps to coordinate the cobalt ion. Lys-184 is partially carboxylated in the complex with pyruvate, but is not carboxylated in the oxaloacetate-bound form.

The catalysed reaction is (S)-methylmalonyl-CoA + pyruvate = propanoyl-CoA + oxaloacetate. Its function is as follows. The 5S subunit specifically catalyzes the transfer of the carboxyl group from biotin of the 1.3S subunit to pyruvate to form oxaloacetate and 1.3S biotin. The protein is Methylmalonyl-CoA carboxyltransferase 5S subunit of Propionibacterium freudenreichii subsp. shermanii.